Consider the following 1196-residue polypeptide: Major DNA-binding protein (1196 aa).

A zinc finger spans residues 499–512; it reads CNLCTFDTRHACVH. 2 consecutive short sequence motifs (required for filament formation) follow at residues 843–844 and 1142–1144; these read FW and FNF. Residues 1158-1196 form a disordered region; that stretch reads GGPGAPGPAFAGRKRAFHGDDPFGEGPPDKKGDLTLDML. The interval 1170–1196 is required for nuclear localization; the sequence is RKRAFHGDDPFGEGPPDKKGDLTLDML. Positions 1174–1196 are enriched in basic and acidic residues; sequence FHGDDPFGEGPPDKKGDLTLDML.

The protein belongs to the herpesviridae major DNA-binding protein family. In terms of assembly, homooligomers. Forms double-helical filaments necessary for the formation of replication compartments within the host nucleus. Interacts with the origin-binding protein. Interacts with the helicase primase complex; this interaction stimulates primer synthesis activity of the helicase-primase complex. Interacts with the DNA polymerase. Interacts with the alkaline exonuclease; this interaction increases its nuclease processivity. Interacts with ICP27; this interaction plays a role in the stimulation of late gene transcription.

It is found in the host nucleus. Its function is as follows. Plays several crucial roles in viral infection. Participates in the opening of the viral DNA origin to initiate replication by interacting with the origin-binding protein. May disrupt loops, hairpins and other secondary structures present on ssDNA to reduce and eliminate pausing of viral DNA polymerase at specific sites during elongation. Promotes viral DNA recombination by performing strand-transfer, characterized by the ability to transfer a DNA strand from a linear duplex to a complementary single-stranded DNA circle. Can also catalyze the renaturation of complementary single strands. Additionally, reorganizes the host cell nucleus, leading to the formation of prereplicative sites and replication compartments. This process is driven by the protein which can form double-helical filaments in the absence of DNA. This is Major DNA-binding protein from Homo sapiens (Human).